The chain runs to 194 residues: Cell division protein SepF (194 aa).

2 disordered regions span residues 35–54 (DHRS…DSSP) and 159–194 (SAPS…AGGL).

The protein belongs to the SepF family. As to quaternary structure, homodimer. Interacts with FtsZ.

It localises to the cytoplasm. In terms of biological role, cell division protein that is part of the divisome complex and is recruited early to the Z-ring. Probably stimulates Z-ring formation, perhaps through the cross-linking of FtsZ protofilaments. Its function overlaps with FtsA. The polypeptide is Cell division protein SepF (Prochlorococcus marinus (strain MIT 9313)).